Here is a 1034-residue protein sequence, read N- to C-terminus: MISLNNSFFNKRVIVNSFNNYKRSFGTKSQNEESAIVDSNHSFAHTLNLPKTTFSMKANAATREPTLLKDPYKLYKWQLENNKGENWVFHDGPPYANGDLHMGHALNKILKDIVNRYKVLKGFKVNYIPGWDCHGLPIEQQAFKKLKKSSDMKASDIRKIAGDFARKEIEKQSKGFQEMGILGDWENPYKTLDYGYEVEQIQTFYDMFNKGYIYRGVKPVHWSPSSRTALADAELEYNNNHTSKSIFVKFNVKSLSNHILNNLPTTSDINKAEMVISAIIWTTTPWTIPANQAICVNSEMDYILVKPIESEQYRNEMFIISKERLESLTKSFNIGELKVILEFKGEQLKGTITKHPQYDRESPIITGDHVIEGSGTGLVHTAPGHGVEDFQICQQQYPDLKVLSPVNDLGCFTDEVGEKFVGLEVLGDGNEAVINDLETIGSLLHKEDYIHKYPYDWRTKKPIIIRTTLQWFVGLKNIQKTALQSIERVNMVPPSGSNRLSSMIGKRTDWCISRQRVWGCPIPVLYNCKTNEPLINDESINHIKELFGKFGSDCWFEMSTQQLLPPSLKDQHENFVKGTDTMDVWFDSGTSWRGVLVERGIIDKDTGRADIYLEGSDQHRGWFQSSLLTSVCVRDIEPYKNVVTHGFLLDESGIKMSKSIGNTIVPSTVIKGGPNKVQNPPYGVDLLRTWVASSDYSKDISIGPNILIKILDGIKKIRNTLRFMLASNFDFDPTIHAIPYEKLSSLDKYALHRVFKLQESVTRHYDQFQFQKVHTEIINFSIEISSFYFDVIKRHLYAESPNSHSRRSTQTVLFKMLDVINIALAPITVHTSEDVFLHQYQFKNNGKGLDKNLIENSVFAHGWDQLPSQYENELISNQFTNIIAIRDVVNRVLQSMRSQGIIGRSDETIMELTVTNEESSPFYDNLFAINSQLDDIFCVSNVLLKKFNTFEKDVEQQQQQQQQQQQQQPQQIEPNSKGEFIFNTIISNNSKQLGRIEVLLKISDKFKCPRCWRHTSIENDKVCKPCDSVLNSLK.

Residues 1-32 (MISLNNSFFNKRVIVNSFNNYKRSFGTKSQNE) constitute a mitochondrion transit peptide. Positions 94–104 (PYANGDLHMGH) match the 'HIGH' region motif. The 'KMSKS' region signature appears at 655 to 659 (KMSKS). Residue Lys-658 coordinates ATP.

This sequence belongs to the class-I aminoacyl-tRNA synthetase family.

It localises to the mitochondrion matrix. The enzyme catalyses tRNA(Ile) + L-isoleucine + ATP = L-isoleucyl-tRNA(Ile) + AMP + diphosphate. This Dictyostelium discoideum (Social amoeba) protein is Probable isoleucine--tRNA ligase, mitochondrial (mileS).